A 249-amino-acid polypeptide reads, in one-letter code: Pyridoxine 5'-phosphate synthase (249 aa).

Asn12 serves as a coordination point for 3-amino-2-oxopropyl phosphate. 14 to 15 contacts 1-deoxy-D-xylulose 5-phosphate; sequence DH. Residue Arg23 participates in 3-amino-2-oxopropyl phosphate binding. Catalysis depends on His48, which acts as the Proton acceptor. 2 residues coordinate 1-deoxy-D-xylulose 5-phosphate: Arg50 and His55. Glu75 acts as the Proton acceptor in catalysis. Thr105 provides a ligand contact to 1-deoxy-D-xylulose 5-phosphate. The Proton donor role is filled by His199. Residues Gly200 and 221 to 222 contribute to the 3-amino-2-oxopropyl phosphate site; that span reads GH.

This sequence belongs to the PNP synthase family. In terms of assembly, homooctamer; tetramer of dimers.

The protein localises to the cytoplasm. The enzyme catalyses 3-amino-2-oxopropyl phosphate + 1-deoxy-D-xylulose 5-phosphate = pyridoxine 5'-phosphate + phosphate + 2 H2O + H(+). It functions in the pathway cofactor biosynthesis; pyridoxine 5'-phosphate biosynthesis; pyridoxine 5'-phosphate from D-erythrose 4-phosphate: step 5/5. In terms of biological role, catalyzes the complicated ring closure reaction between the two acyclic compounds 1-deoxy-D-xylulose-5-phosphate (DXP) and 3-amino-2-oxopropyl phosphate (1-amino-acetone-3-phosphate or AAP) to form pyridoxine 5'-phosphate (PNP) and inorganic phosphate. This is Pyridoxine 5'-phosphate synthase from Roseobacter denitrificans (strain ATCC 33942 / OCh 114) (Erythrobacter sp. (strain OCh 114)).